A 277-amino-acid polypeptide reads, in one-letter code: RsbT co-antagonist protein RsbRB (277 aa).

The region spanning 165-276 (SSPVITLSKS…TNLAQALNYH (112 aa)) is the STAS domain. The residue at position 186 (threonine 186) is a Phosphothreonine.

Interacts with RsbRA and RsbS in the stressosome. The stressosome probably also contains RsbRC and RsbRD. Phosphorylated by RsbT.

Its function is as follows. One of 4 functionally non-identical RsbR paralogs, it functions in the environmental signaling branch of the general stress response. In terms of biological role, negative regulator of sigma-B activity. Non-phosphorylated RsbS binds to RsbT, preventing its association with RsbU. Requires any one of RsbRA, RsbRB, RsbRC or RsbRD to sequester RsbT. When RsbS and the RsbR paralog(s) are phosphorylated, they release RsbT, which can then bind and activate RsbU. The protein is RsbT co-antagonist protein RsbRB (rsbRB) of Bacillus subtilis (strain 168).